Here is a 168-residue protein sequence, read N- to C-terminus: uncharacterized protein (168 aa).

Residues 1–52 (MVLGLASFPESLSSQSETATQPRRPSVKWDLGSDYRKGTEETTASGSNFRRE) form a disordered region. Over residues 10–23 (ESLSSQSETATQPR) the composition is skewed to polar residues. Basic and acidic residues predominate over residues 31–40 (LGSDYRKGTE).

This is an uncharacterized protein from Mus musculus (Mouse).